A 149-amino-acid chain; its full sequence is Aquaporin-like protein 2 (149 aa).

The tract at residues 1 to 35 (MSNESNDLEKNISHLDPTGVDNAYIPPEQPETKHS) is disordered. Residues 1–47 (MSNESNDLEKNISHLDPTGVDNAYIPPEQPETKHSRFNIDRDTLRNH) lie on the Cytoplasmic side of the membrane. A helical transmembrane segment spans residues 48-68 (FIAAVGEFCGTFMFLWCAYVI). The Extracellular portion of the chain corresponds to 69-89 (CNVANHDVALTTEPEGSHPGQ). Residues 90–110 (LIMIALGFGFSVMFSIWCFWW) form a helical membrane-spanning segment. At 111 to 149 (GFEPSRFSLFVFGQSHLSSQMCSDVVSSDHCWDGCWWCR) the chain is on the cytoplasmic side.

It belongs to the MIP/aquaporin (TC 1.A.8) family.

Its subcellular location is the endoplasmic reticulum membrane. It is found in the cell membrane. Water channel required to facilitate the transport of water across membranes. Involved in freeze tolerance, osmotolerance and cell flocculation in liquid cultures. Is non-functional in most laboratory strains. This is Aquaporin-like protein 2 (AQY2-2) from Saccharomyces cerevisiae (strain RM11-1a) (Baker's yeast).